Consider the following 591-residue polypeptide: Mono(ADP-ribosyl)transferase SpvB (591 aa).

The region spanning P373–D576 is the TR mART core domain. Residues R414 and R471–K477 each bind NAD(+). Residues R471, S501, and E538 contribute to the active site. An NAD(+)-binding site is contributed by E538.

Belongs to the SpvB family.

The protein resides in the secreted. The enzyme catalyses L-arginyl-[protein] + NAD(+) = N(omega)-(ADP-D-ribosyl)-L-arginyl-[protein] + nicotinamide + H(+). Inhibited by novobiocin. Its function is as follows. Mono-ADP-ribosylates eukaryotic muscle and non-muscle actin on 'Arg-177'. ADP-ribosylates all actins tested, has more activity on nonmuscle beta/gamma-actin than on muscle alpha-actin. Prefers monomeric G-actin but can weakly ADP-ribosylate F-actin. ADP-ribosylation prevents the polymerization of G-actin to F-actin, causing actin filament depolymerization, destruction of the cytoskeleton and cytotoxicity. Does not possess NAD(+)-glycohydrolase activity, unlike most mART enzymes. In Salmonella typhimurium, this protein is Mono(ADP-ribosyl)transferase SpvB (spvB).